The primary structure comprises 331 residues: Probable allantoicase (331 aa).

The protein belongs to the allantoicase family.

The catalysed reaction is allantoate + H2O = (S)-ureidoglycolate + urea. It participates in nitrogen metabolism; (S)-allantoin degradation; (S)-ureidoglycolate from allantoate (aminidohydrolase route): step 1/1. The chain is Probable allantoicase from Pseudomonas fluorescens (strain SBW25).